Here is a 907-residue protein sequence, read N- to C-terminus: Valine--tRNA ligase (907 aa).

Residues 45 to 55 carry the 'HIGH' region motif; sequence PNVTGSLHMGH. Residues 554 to 558 carry the 'KMSKS' region motif; it reads KMSKS. K557 contacts ATP. A coiled-coil region spans residues 838–870; that stretch reads GQLIDLEAERARLMKDVSKIEQDIEKLSAKLSN.

The protein belongs to the class-I aminoacyl-tRNA synthetase family. ValS type 1 subfamily. As to quaternary structure, monomer.

It is found in the cytoplasm. It carries out the reaction tRNA(Val) + L-valine + ATP = L-valyl-tRNA(Val) + AMP + diphosphate. Functionally, catalyzes the attachment of valine to tRNA(Val). As ValRS can inadvertently accommodate and process structurally similar amino acids such as threonine, to avoid such errors, it has a 'posttransfer' editing activity that hydrolyzes mischarged Thr-tRNA(Val) in a tRNA-dependent manner. The chain is Valine--tRNA ligase from Bartonella henselae (strain ATCC 49882 / DSM 28221 / CCUG 30454 / Houston 1) (Rochalimaea henselae).